Here is a 364-residue protein sequence, read N- to C-terminus: Ribosomal RNA large subunit methyltransferase M (364 aa).

Residues S187, 220 to 223 (CPGG), D239, D259, and D276 each bind S-adenosyl-L-methionine. K305 serves as the catalytic Proton acceptor.

It belongs to the class I-like SAM-binding methyltransferase superfamily. RNA methyltransferase RlmE family. RlmM subfamily. In terms of assembly, monomer.

The protein localises to the cytoplasm. The enzyme catalyses cytidine(2498) in 23S rRNA + S-adenosyl-L-methionine = 2'-O-methylcytidine(2498) in 23S rRNA + S-adenosyl-L-homocysteine + H(+). In terms of biological role, catalyzes the 2'-O-methylation at nucleotide C2498 in 23S rRNA. The protein is Ribosomal RNA large subunit methyltransferase M of Aeromonas hydrophila subsp. hydrophila (strain ATCC 7966 / DSM 30187 / BCRC 13018 / CCUG 14551 / JCM 1027 / KCTC 2358 / NCIMB 9240 / NCTC 8049).